Reading from the N-terminus, the 373-residue chain is Dual-specificity RNA methyltransferase RlmN (373 aa).

The Proton acceptor role is filled by glutamate 91. Residues 97–339 (EDDRGTLCIS…TTVRKTRGDD (243 aa)) form the Radical SAM core domain. Cysteines 104 and 344 form a disulfide. 3 residues coordinate [4Fe-4S] cluster: cysteine 111, cysteine 115, and cysteine 118. Residues 165-166 (GE), serine 197, 219-221 (SLH), and asparagine 301 each bind S-adenosyl-L-methionine. Cysteine 344 functions as the S-methylcysteine intermediate in the catalytic mechanism.

This sequence belongs to the radical SAM superfamily. RlmN family. The cofactor is [4Fe-4S] cluster.

The protein resides in the cytoplasm. The catalysed reaction is adenosine(2503) in 23S rRNA + 2 reduced [2Fe-2S]-[ferredoxin] + 2 S-adenosyl-L-methionine = 2-methyladenosine(2503) in 23S rRNA + 5'-deoxyadenosine + L-methionine + 2 oxidized [2Fe-2S]-[ferredoxin] + S-adenosyl-L-homocysteine. It catalyses the reaction adenosine(37) in tRNA + 2 reduced [2Fe-2S]-[ferredoxin] + 2 S-adenosyl-L-methionine = 2-methyladenosine(37) in tRNA + 5'-deoxyadenosine + L-methionine + 2 oxidized [2Fe-2S]-[ferredoxin] + S-adenosyl-L-homocysteine. Specifically methylates position 2 of adenine 2503 in 23S rRNA and position 2 of adenine 37 in tRNAs. m2A2503 modification seems to play a crucial role in the proofreading step occurring at the peptidyl transferase center and thus would serve to optimize ribosomal fidelity. The chain is Dual-specificity RNA methyltransferase RlmN from Paracidovorax citrulli (strain AAC00-1) (Acidovorax citrulli).